We begin with the raw amino-acid sequence, 157 residues long: Phosphopantetheine adenylyltransferase (157 aa).

Threonine 8 lines the substrate pocket. Residues 8–9 (TF) and histidine 16 each bind ATP. Lysine 40, threonine 72, and arginine 86 together coordinate substrate. Residues 87 to 89 (GLR), glutamate 97, and 122 to 128 (YSFLSSS) each bind ATP.

Belongs to the bacterial CoaD family. In terms of assembly, homohexamer. Mg(2+) is required as a cofactor.

Its subcellular location is the cytoplasm. It carries out the reaction (R)-4'-phosphopantetheine + ATP + H(+) = 3'-dephospho-CoA + diphosphate. It functions in the pathway cofactor biosynthesis; coenzyme A biosynthesis; CoA from (R)-pantothenate: step 4/5. Reversibly transfers an adenylyl group from ATP to 4'-phosphopantetheine, yielding dephospho-CoA (dPCoA) and pyrophosphate. This Prochlorococcus marinus (strain MIT 9215) protein is Phosphopantetheine adenylyltransferase.